The sequence spans 104 residues: Co-chaperonin GroES 2 (104 aa).

This sequence belongs to the GroES chaperonin family. Heptamer of 7 subunits arranged in a ring. Interacts with the chaperonin GroEL.

Its subcellular location is the cytoplasm. Functionally, together with the chaperonin GroEL, plays an essential role in assisting protein folding. The GroEL-GroES system forms a nano-cage that allows encapsulation of the non-native substrate proteins and provides a physical environment optimized to promote and accelerate protein folding. GroES binds to the apical surface of the GroEL ring, thereby capping the opening of the GroEL channel. This chain is Co-chaperonin GroES 2, found in Rhodopseudomonas palustris (strain ATCC BAA-98 / CGA009).